The following is a 549-amino-acid chain: Urocanate hydratase (549 aa).

NAD(+) contacts are provided by residues 46-47 (GG), glutamine 124, glutamate 190, arginine 195, 236-237 (NA), 257-261 (QTSAH), 267-268 (YV), and tyrosine 316. Residue cysteine 404 is part of the active site. Glycine 486 provides a ligand contact to NAD(+).

The protein belongs to the urocanase family. It depends on NAD(+) as a cofactor.

Its subcellular location is the cytoplasm. The enzyme catalyses 4-imidazolone-5-propanoate = trans-urocanate + H2O. Its pathway is amino-acid degradation; L-histidine degradation into L-glutamate; N-formimidoyl-L-glutamate from L-histidine: step 2/3. In terms of biological role, catalyzes the conversion of urocanate to 4-imidazolone-5-propionate. The protein is Urocanate hydratase of Thermoanaerobacter pseudethanolicus (strain ATCC 33223 / 39E) (Clostridium thermohydrosulfuricum).